Consider the following 137-residue polypeptide: Succinate dehydrogenase cytochrome b560 subunit (137 aa).

The next 2 membrane-spanning stretches (helical) occupy residues 31–51 (AFLA…DLSL) and 60–80 (FFFL…FTLL). His-85 lines the heme pocket. A helical transmembrane segment spans residues 106 to 126 (VYTSGIIMLFCAAFLALLNII).

The protein belongs to the cytochrome b560 family. In terms of assembly, forms part of complex II containing four subunits: a 70 kDa flavoprotein (FP), a 27 kDa iron-sulfur protein (IP), a cytochrome B and a membrane-anchoring protein. Heme serves as cofactor.

The protein resides in the mitochondrion inner membrane. It participates in carbohydrate metabolism; tricarboxylic acid cycle. Functionally, membrane-anchoring subunit of succinate dehydrogenase (SDH) that is involved in complex II of the mitochondrial electron transport chain and is responsible for transferring electrons from succinate to ubiquinone (coenzyme Q). The polypeptide is Succinate dehydrogenase cytochrome b560 subunit (SDH3) (Marchantia polymorpha (Common liverwort)).